The following is an 89-amino-acid chain: Small ribosomal subunit protein uS15 (89 aa).

The protein belongs to the universal ribosomal protein uS15 family. Part of the 30S ribosomal subunit. Forms a bridge to the 50S subunit in the 70S ribosome, contacting the 23S rRNA.

Functionally, one of the primary rRNA binding proteins, it binds directly to 16S rRNA where it helps nucleate assembly of the platform of the 30S subunit by binding and bridging several RNA helices of the 16S rRNA. Its function is as follows. Forms an intersubunit bridge (bridge B4) with the 23S rRNA of the 50S subunit in the ribosome. The sequence is that of Small ribosomal subunit protein uS15 from Acidothermus cellulolyticus (strain ATCC 43068 / DSM 8971 / 11B).